Here is a 321-residue protein sequence, read N- to C-terminus: Probable UDP-sugar transporter protein SLC35A4 (321 aa).

Topologically, residues 1–22 (MYSVNIEPDGSNHSPSRKRLKQ) are cytoplasmic. The helical transmembrane segment at 23 to 43 (ILWGLMLVLSVTIYGSHAPLI) threads the bilayer. Over 44–56 (YLCKVNGEIPFSS) the chain is Lumenal. Residues 57 to 77 (SAVVLLIELSKFVISLVFFLI) traverse the membrane as a helical segment. Over 78-91 (QDWKSLKASVSWHL) the chain is Cytoplasmic. Residues 92 to 112 (AAPYAVPAVLYGANNNLVVYI) traverse the membrane as a helical segment. Residues 113-119 (QHFMDPS) lie on the Lumenal side of the membrane. A helical transmembrane segment spans residues 120–140 (SFQVLSNLKIVSTAVLYSLFL). At 141-149 (RQRLSVRRW) the chain is on the cytoplasmic side. Residues 150–170 (LSVFLLLAAGVFYSYGGIQDL) form a helical membrane-spanning segment. At 171 to 180 (EKVSSDTNLY) the chain is on the lumenal side. A helical membrane pass occupies residues 181 to 201 (VTLPGLLLMLAYCLISGLSAV). Topologically, residues 202-211 (YTEMTLKTQK) are cytoplasmic. A helical transmembrane segment spans residues 212-232 (IPLNMQNLYLYSFGIIINLTA). The Lumenal portion of the chain corresponds to 233 to 247 (HLTSSKNSDFFDGFS). Residues 248 to 268 (VWVWVIILSQALNGLIMSLVM) form a helical membrane-spanning segment. The Cytoplasmic portion of the chain corresponds to 269 to 321 (KLSNNITRLFIISFSMLANGFLSFILFQLQLTALFFLAVVLIGLAVYMYYGMK).

This sequence belongs to the nucleotide-sugar transporter family. SLC35A subfamily.

It is found in the golgi apparatus membrane. It carries out the reaction CDP-L-ribitol(in) + CDP(out) = CDP-L-ribitol(out) + CDP(in). Its function is as follows. Mediates the transport of CDP-ribitol. Does not exhibit CMP-sialic acid, UDP-galactose and UDP-N-acetylglucosamine transport activity. The protein is Probable UDP-sugar transporter protein SLC35A4 of Xenopus tropicalis (Western clawed frog).